Reading from the N-terminus, the 587-residue chain is Mitogen-activated protein kinase 4 (587 aa).

In terms of domain architecture, Protein kinase spans 20 to 312 (FVDFQPLGFG…AEMGLQHPYM (293 aa)). ATP is bound by residues 26–34 (LGFGVNGLV) and Lys49. The active-site Proton acceptor is the Asp149. Phosphoserine; by PAK1, PAK2 and PAK3 is present on Ser186. Residues 186 to 188 (SEG) carry the SEG motif motif. The FRIEDE motif signature appears at 328–333 (FRIEDE). Basic and acidic residues-rich tracts occupy residues 373–383 (QDASEVQRDPR) and 395–413 (VDPRKDSHSSSERFLEQSH). A disordered region spans residues 373-413 (QDASEVQRDPRAGSAPLAEDVQVDPRKDSHSSSERFLEQSH). Ser434 is subject to Phosphoserine. The tract at residues 499 to 534 (STQGGPEHASPPADDPERRLSASPPGRPAPVDGGAS) is disordered.

This sequence belongs to the protein kinase superfamily. CMGC Ser/Thr protein kinase family. MAP kinase subfamily. In terms of assembly, homodimer. Heterodimer with ERK3/MAPK6. Interacts with (via FRIEDE motif) MAPKAPK5. Mg(2+) is required as a cofactor. Phosphorylated at Ser-186 by PAK1, PAK2 and PAK3 resulting in catalytic activation. Phosphorylated by MAPKAPK5 at other sites. High expression in heart and brain.

It is found in the cytoplasm. It localises to the nucleus. The catalysed reaction is L-seryl-[protein] + ATP = O-phospho-L-seryl-[protein] + ADP + H(+). It carries out the reaction L-threonyl-[protein] + ATP = O-phospho-L-threonyl-[protein] + ADP + H(+). Activated by phosphorylation at Ser-186. Its function is as follows. Atypical MAPK protein. Phosphorylates microtubule-associated protein 2 (MAP2) and MAPKAPK5. The precise role of the complex formed with MAPKAPK5 is still unclear, but the complex follows a complex set of phosphorylation events: upon interaction with atypical MAPKAPK5, ERK4/MAPK4 is phosphorylated at Ser-186 and then mediates phosphorylation and activation of MAPKAPK5, which in turn phosphorylates ERK4/MAPK4. May promote entry in the cell cycle. In Homo sapiens (Human), this protein is Mitogen-activated protein kinase 4 (MAPK4).